The primary structure comprises 130 residues: Small ribosomal subunit protein uS9 (130 aa).

This sequence belongs to the universal ribosomal protein uS9 family.

The protein is Small ribosomal subunit protein uS9 of Bacillus cytotoxicus (strain DSM 22905 / CIP 110041 / 391-98 / NVH 391-98).